The chain runs to 210 residues: Glycerol-3-phosphate acyltransferase 2 (210 aa).

The next 6 helical transmembrane spans lie at 4–24 (LIMVIIALIAAYFIGSTPAPY), 52–72 (VGFWPGILVLTTDIGKGALAM), 73–93 (AVANWLGEGLGIQMLCALMAI), 114–134 (IGILAYMMPEGIPIYIACFLI), 141–161 (FPTLSYGISFISFILVAWLGQ), and 163–183 (DMGKVLFSLLVVMIPILMYIP).

This sequence belongs to the PlsY family. In terms of assembly, probably interacts with PlsX.

It localises to the cell membrane. It carries out the reaction an acyl phosphate + sn-glycerol 3-phosphate = a 1-acyl-sn-glycero-3-phosphate + phosphate. Its pathway is lipid metabolism; phospholipid metabolism. Functionally, catalyzes the transfer of an acyl group from acyl-phosphate (acyl-PO(4)) to glycerol-3-phosphate (G3P) to form lysophosphatidic acid (LPA). This enzyme utilizes acyl-phosphate as fatty acyl donor, but not acyl-CoA or acyl-ACP. The sequence is that of Glycerol-3-phosphate acyltransferase 2 from Dehalococcoides mccartyi (strain CBDB1).